Reading from the N-terminus, the 261-residue chain is MICOS complex subunit Mic25 (261 aa).

The N-myristoyl glycine moiety is linked to residue Gly-2. A phosphoserine mark is found at Ser-13, Ser-31, and Ser-33. Disordered stretches follow at residues 39 to 59 (KDCS…PECS), 81 to 114 (CGPA…VKED), and 140 to 165 (TEKH…RLTR). A coiled-coil region spans residues 109-202 (SAVKEDLKKF…AELYKLSSQQ (94 aa)). Positions 154-165 (THEQQQSDRLTR) are enriched in basic and acidic residues. Residues 220 to 261 (EPVCSGLQAQILRCYRDHLHEVLLCSDLAKAYQHCVSTARKG) form the CHCH domain. 2 short sequence motifs (cx9C motif) span residues 223–233 (CSGLQAQILRC) and 244–254 (CSDLAKAYQHC). Cystine bridges form between Cys-223–Cys-254 and Cys-233–Cys-244.

It belongs to the MICOS complex subunit Mic19 family. Metazoan Mic25 subfamily. As to quaternary structure, component of the mitochondrial contact site and cristae organizing system (MICOS) complex, composed of at least MICOS10/MIC10, CHCHD3/MIC19, CHCHD6/MIC25, APOOL/MIC27, IMMT/MIC60, APOO/MIC23/MIC26 and MICOS13/MIC13. This complex was also known under the names MINOS or MitOS complex. The MICOS complex associates with mitochondrial outer membrane proteins SAMM50, MTX1 and MTX2 (together described as components of the mitochondrial outer membrane sorting assembly machinery (SAM) complex) and DNAJC11, mitochondrial inner membrane protein TMEM11 and with HSPA9. The MICOS and SAM complexes together with DNAJC11 are part of a large protein complex spanning both membranes termed the mitochondrial intermembrane space bridging (MIB) complex. Interacts with DISC1. Interacts with IMMT/MIC60.

It localises to the mitochondrion inner membrane. The protein resides in the mitochondrion. In terms of biological role, component of the MICOS complex, a large protein complex of the mitochondrial inner membrane that plays crucial roles in the maintenance of crista junctions, inner membrane architecture, and formation of contact sites to the outer membrane. In Rattus norvegicus (Rat), this protein is MICOS complex subunit Mic25 (Chchd6).